The chain runs to 434 residues: Alpha-enolase (434 aa).

A Mg(2+)-binding site is contributed by S40. Residues H158 and E167 each coordinate substrate. E210 functions as the Proton donor in the catalytic mechanism. Mg(2+)-binding residues include D245, E293, and D318. Substrate contacts are provided by E293 and D318. K343 acts as the Proton acceptor in catalysis. Substrate contacts are provided by residues S370–S373 and K394.

This sequence belongs to the enolase family. As to quaternary structure, homodimer. The cofactor is Mg(2+).

The protein localises to the cytoplasm. It carries out the reaction (2R)-2-phosphoglycerate = phosphoenolpyruvate + H2O. The protein operates within carbohydrate degradation; glycolysis; pyruvate from D-glyceraldehyde 3-phosphate: step 4/5. Both an enzyme and a lens structural protein. This chain is Alpha-enolase (ENO1), found in Anas platyrhynchos (Mallard).